Consider the following 142-residue polypeptide: Hemoglobin subunit alpha-A (142 aa).

Positions 2–142 constitute a Globin domain; it reads VLSANDKTNV…VGNVLTAKYR (141 aa). Residue His59 participates in O2 binding. His88 is a heme b binding site.

The protein belongs to the globin family. In terms of assembly, heterotetramer of two alpha chains and two beta chains. As to expression, red blood cells.

Involved in oxygen transport from the lung to the various peripheral tissues. This Accipiter gentilis (Northern goshawk) protein is Hemoglobin subunit alpha-A (HBAA).